The following is a 195-amino-acid chain: Exosome complex component CSL4 (195 aa).

A Phosphoserine modification is found at Ser21. One can recognise an S1 motif domain in the interval 66–147; sequence DVGAVVTCKV…AQSNYLLTTA (82 aa).

This sequence belongs to the CSL4 family. Component of the RNA exosome core complex (Exo-9), composed of EXOSC1, EXOSC2, EXOSC3, EXOSC4, EXOSC5, EXOSC6, EXOSC7, EXOSC8 and EXOSC9; within the complex interacts with EXOSC6. The catalytically inactive RNA exosome core complex (Exo-9) associates with the catalytic subunit EXOSC10/RRP6. Exo-9 may associate with DIS3 to form the nucleolar exosome complex, or DIS3L to form the cytoplasmic exosome complex. Exo-9 is formed by a hexameric base ring consisting of the heterodimers EXOSC4-EXOSC9, EXOSC5-EXOSC8 and EXOSC6-EXOSC7, and a cap ring consisting of EXOSC1, EXOSC2 and EXOSC3. The RNA exosome complex associates with cofactors C1D/RRP47, MPHOSPH6/MPP6 and MTREX/MTR4. Interacts with DDX60.

The protein localises to the nucleus. The protein resides in the nucleolus. It is found in the cytoplasm. In terms of biological role, non-catalytic component of the RNA exosome complex which has 3'-&gt;5' exoribonuclease activity and participates in a multitude of cellular RNA processing and degradation events. In the nucleus, the RNA exosome complex is involved in proper maturation of stable RNA species such as rRNA, snRNA and snoRNA, in the elimination of RNA processing by-products and non-coding 'pervasive' transcripts, such as antisense RNA species and promoter-upstream transcripts (PROMPTs), and of mRNAs with processing defects, thereby limiting or excluding their export to the cytoplasm. The RNA exosome may be involved in Ig class switch recombination (CSR) and/or Ig variable region somatic hypermutation (SHM) by targeting AICDA deamination activity to transcribed dsDNA substrates. In the cytoplasm, the RNA exosome complex is involved in general mRNA turnover and specifically degrades inherently unstable mRNAs containing AU-rich elements (AREs) within their 3' untranslated regions, and in RNA surveillance pathways, preventing translation of aberrant mRNAs. It seems to be involved in degradation of histone mRNA. The catalytic inactive RNA exosome core complex of 9 subunits (Exo-9) is proposed to play a pivotal role in the binding and presentation of RNA for ribonucleolysis, and to serve as a scaffold for the association with catalytic subunits and accessory proteins or complexes. EXOSC1 as peripheral part of the Exo-9 complex stabilizes the hexameric ring of RNase PH-domain subunits through contacts with EXOSC6 and EXOSC8. This Mus musculus (Mouse) protein is Exosome complex component CSL4 (Exosc1).